The primary structure comprises 81 residues: Large ribosomal subunit protein bL31B (81 aa).

Belongs to the bacterial ribosomal protein bL31 family. Type B subfamily. Part of the 50S ribosomal subunit.

The polypeptide is Large ribosomal subunit protein bL31B (Borreliella burgdorferi (strain ZS7) (Borrelia burgdorferi)).